Reading from the N-terminus, the 101-residue chain is Ubiquitin-related modifier 1 homolog (101 aa).

Gly-101 carries the post-translational modification 1-thioglycine. A Glycyl lysine isopeptide (Gly-Lys) (interchain with K-? in acceptor proteins) cross-link involves residue Gly-101.

Belongs to the URM1 family. Interacts with cer. C-terminal thiocarboxylation occurs in 2 steps, it is first acyl-adenylated (-COAMP) via the hesA/moeB/thiF part of the MOCS3 homolog, then thiocarboxylated (-COSH) via the rhodanese domain of the MOCS3 homolog.

The protein localises to the cytoplasm. The protein operates within tRNA modification; 5-methoxycarbonylmethyl-2-thiouridine-tRNA biosynthesis. Functionally, acts as a sulfur carrier required for 2-thiolation of mcm(5)S(2)U at tRNA wobble positions of cytosolic tRNA(Lys), tRNA(Glu) and tRNA(Gln). Serves as sulfur donor in tRNA 2-thiolation reaction by being thiocarboxylated (-COSH) at its C-terminus by MOCS3. The sulfur is then transferred to tRNA to form 2-thiolation of mcm(5)S(2)U. Also acts as a ubiquitin-like protein (UBL) that is covalently conjugated via an isopeptide bond to lysine residues of target proteins such as Prx2/Jafrac1, Ciao1, Eip71CD and GILT1. The thiocarboxylated form serves as substrate for conjugation and oxidative stress specifically induces the formation of UBL-protein conjugates. The chain is Ubiquitin-related modifier 1 homolog from Drosophila ananassae (Fruit fly).